A 215-amino-acid chain; its full sequence is Peroxiredoxin (215 aa).

Residues 6-161 (PLIGEEFPRV…ILRAVKALQT (156 aa)) enclose the Thioredoxin domain. Cysteine 48 (cysteine sulfenic acid (-SOH) intermediate) is an active-site residue. Arginine 124 is a substrate binding site. A disulfide bridge links cysteine 205 with cysteine 211.

It belongs to the peroxiredoxin family. Prx6 subfamily. As to quaternary structure, homodecamer. Pentamer of dimers that assemble into a ring structure.

The protein resides in the cytoplasm. It catalyses the reaction a hydroperoxide + [thioredoxin]-dithiol = an alcohol + [thioredoxin]-disulfide + H2O. In terms of biological role, thiol-specific peroxidase that catalyzes the reduction of hydrogen peroxide and organic hydroperoxides to water and alcohols, respectively. Plays a role in cell protection against oxidative stress by detoxifying peroxides. This chain is Peroxiredoxin, found in Thermotoga maritima (strain ATCC 43589 / DSM 3109 / JCM 10099 / NBRC 100826 / MSB8).